The sequence spans 256 residues: Short chain dehydrogenase adrF (256 aa).

Positions 11, 57, 119, 151, 155, and 184 each coordinate NADP(+). Tyr151 serves as the catalytic Proton acceptor. Lys155 serves as the catalytic Lowers pKa of active site Tyr.

The protein belongs to the short-chain dehydrogenases/reductases (SDR) family.

The protein operates within secondary metabolite biosynthesis; terpenoid biosynthesis. In terms of biological role, short chain dehydrogenase; part of the gene cluster that mediates the biosynthesis of andrastins, meroterpenoid compounds that exhibit inhibitory activity against ras farnesyltransferase, suggesting that they could be promising leads for antitumor agents. The first step of the pathway is the synthesis of 3,5-dimethylorsellinic acid (DMOA) by the polyketide synthase adrD via condensation of one acetyl-CoA starter unit with 3 malonyl-CoA units and 2 methylations. DMAO is then converted to farnesyl-DMAO by the prenyltransferase adrG. The methyltransferase adrK catalyzes the methylation of the carboxyl group of farnesyl-DMAO to farnesyl-DMAO methyl ester which is further converted to epoxyfarnesyl-DMAO methyl ester by the FAD-dependent monooxygenase adrH. The terpene cyclase adrI then catalyzes the carbon skeletal rearrangement to generate the andrastin E, the first compound in the pathway having the andrastin scaffold, with the tetracyclic ring system. The post-cyclization tailoring enzymes adrF, adrE, adrJ, and adrA, are involved in the conversion of andrastin E into andrastin A. The short chain dehydrogenase adrF is responsible for the oxidation of the C-3 a hydroxyl group of andrastin E to yield the corresponding ketone, andrastin D. The ketoreductase adrE stereoselectively reduces the carbonyl moiety to reverse the stereochemistry of the C-3 position to yield andrastin F. The acetyltransferase adrJ is the acetyltransferase that attaches the acetyl group to the C-3 hydroxyl group of andrastin F to yield andrastin C. Finally, the cytochrome P450 monooxygenase adrA catalyzes two sequential oxidation reactions of the C-23 methyl group, to generate the corresponding alcohol andrastin B, and aldehyde andrastin A. The protein is Short chain dehydrogenase adrF of Penicillium roqueforti.